The sequence spans 541 residues: Zinc finger protein 513 (541 aa).

Residues 1–118 (MPRRKQSHPQ…GEARGERPGP (118 aa)) are disordered. The span at 44–57 (LEFEEEEEEEEGDG) shows a compositional bias: acidic residues. Phosphoserine occurs at positions 85 and 96. Residues 103 to 115 (EPARGPGEARGER) show a composition bias toward basic and acidic residues. C2H2-type zinc fingers lie at residues 150–172 (YSCRLCTFVSHYSSHLKRHMQTH), 178–200 (FRCGRCPYASAQLVNLTRHTRTH), 206–228 (YRCPHCPFACSSLGNLRRHQRTH), 360–382 (FACSLCPFATHYPNHLARHMKTH), 388–410 (FRCARCPYASAHLDNLKRHQRVH), 416–438 (YKCPLCPYACGNLANLKRHGRIH), 444–466 (FRCSLCNYSCNQSMNLKRHMLRH), and 472–494 (FRCATCAYTTGHWDNYKRHQKVH). The tract at residues 492–541 (KVHGHGGAGGPGLSASEGWAPPHSPPSVLSSRGPPALGTAGSRAVHTDSS) is disordered.

The protein belongs to the krueppel C2H2-type zinc-finger protein family. Binds DNA. Can associate with the proximal promoter regions of PAX6 and SP4, and their known targets including ARR3, RHO, OPN1MW2 and OPN1SW. As to expression, in the retina, expressed in the outer and inner nuclear layers, and the ganglion cell layer.

It is found in the nucleus. Functionally, transcriptional regulator that plays a role in retinal development and maintenance. The chain is Zinc finger protein 513 (ZNF513) from Homo sapiens (Human).